We begin with the raw amino-acid sequence, 333 residues long: Phosphate acyltransferase (333 aa).

It belongs to the PlsX family. Homodimer. Probably interacts with PlsY.

It is found in the cytoplasm. The catalysed reaction is a fatty acyl-[ACP] + phosphate = an acyl phosphate + holo-[ACP]. Its pathway is lipid metabolism; phospholipid metabolism. Functionally, catalyzes the reversible formation of acyl-phosphate (acyl-PO(4)) from acyl-[acyl-carrier-protein] (acyl-ACP). This enzyme utilizes acyl-ACP as fatty acyl donor, but not acyl-CoA. The protein is Phosphate acyltransferase of Aliarcobacter butzleri (strain RM4018) (Arcobacter butzleri).